An 86-amino-acid chain; its full sequence is Venom metalloproteinase (86 aa).

A Ca(2+)-binding site is contributed by Asp-7. His-67 contacts Zn(2+). Glu-68 is an active-site residue. Residues His-71 and His-77 each coordinate Zn(2+).

It belongs to the venom metalloproteinase (M12B) family. Requires Zn(2+) as cofactor. As to expression, expressed by the venom gland.

It is found in the secreted. This Tityus serrulatus (Brazilian scorpion) protein is Venom metalloproteinase.